A 492-amino-acid polypeptide reads, in one-letter code: Catalase (492 aa).

Active-site residues include histidine 65 and asparagine 138. Residue tyrosine 348 coordinates heme.

The protein belongs to the catalase family. As to quaternary structure, homotetramer. Heme is required as a cofactor.

The protein localises to the cytoplasm. It localises to the cytosol. Its subcellular location is the peroxisome matrix. It catalyses the reaction 2 H2O2 = O2 + 2 H2O. Functionally, catalyzes the degradation of hydrogen peroxide (H(2)O(2)) generated by peroxisomal oxidases to water and oxygen, thereby protecting cells from the toxic effects of hydrogen peroxide. The protein is Catalase of Ipomoea batatas (Sweet potato).